A 61-amino-acid chain; its full sequence is Large ribosomal subunit protein uL30 (61 aa).

It belongs to the universal ribosomal protein uL30 family. As to quaternary structure, part of the 50S ribosomal subunit.

The protein is Large ribosomal subunit protein uL30 of Exiguobacterium sibiricum (strain DSM 17290 / CCUG 55495 / CIP 109462 / JCM 13490 / 255-15).